Consider the following 2140-residue polypeptide: Dedicator of cytokinesis protein 7 (2140 aa).

Phosphoserine is present on residues Ser-30, Ser-180, and Ser-182. A disordered region spans residues 138-183 (FNPNTLDKQKERQKGLPKQVFESDEAPDGNSYQDDQDDLKRRSMSI). A coiled-coil region spans residues 365–395 (FKEADATKNKEKLEKLKSQADQFCQRLGKYR). Lys-381 carries the post-translational modification N6-methyllysine. Thr-450 carries the post-translational modification Phosphothreonine. A Phosphoserine modification is found at Ser-452. In terms of domain architecture, C2 DOCK-type spans 561-727 (RNLLYIYPQS…GVFNVEVVAV (167 aa)). Residues Ser-862, Ser-864, Ser-882, Ser-888, Ser-896, Ser-900, and Ser-905 each carry the phosphoserine modification. Residues 888–901 (SLNLNRSRSLSNSN) are compositionally biased toward low complexity. The tract at residues 888 to 971 (SLNLNRSRSL…MSSHTETSSF (84 aa)) is disordered. Thr-907 and Thr-909 each carry phosphothreonine. Phosphoserine occurs at positions 910, 929, 964, 1383, 1390, 1394, 1398, 1421, 1425, 1429, 1430, 1432, 1434, and 1438. Residues 943–971 (SNPSPSAESTQAMDRSCNRMSSHTETSSF) show a composition bias toward polar residues. The 437-residue stretch at 1678 to 2114 (KGYQTSPDLR…LQPLINRKIP (437 aa)) folds into the DOCKER domain. Position 1962 is an N6-acetyllysine (Lys-1962). Residues 2086 to 2112 (DQKEYQRELERNYHRLKEALQPLINRK) adopt a coiled-coil conformation. Phosphoserine is present on Ser-2129.

This sequence belongs to the DOCK family. In terms of assembly, component of the DOCK7-induced septin displacement/DISP complex, at least composed of DOCK7, LRCH3 and MYO6. Interacts with TSC1. Interacts with nucleotide-free RAC1 and RAC3. Interacts with TACC3 and CRY1. Interacts with NOD2. In terms of tissue distribution, widely expressed.

The protein localises to the cell projection. It is found in the axon. Functions as a guanine nucleotide exchange factor (GEF), which activates Rac1 and Rac3 Rho small GTPases by exchanging bound GDP for free GTP. Does not have a GEF activity for CDC42. Required for STMN1 'Ser-15' phosphorylation during axon formation and consequently for neuronal polarization. As part of the DISP complex, may regulate the association of septins with actin and thereby regulate the actin cytoskeleton. Has a role in pigmentation. Involved in the regulation of cortical neurogenesis through the control of radial glial cells (RGCs) proliferation versus differentiation; negatively regulates the basal-to-apical interkinetic nuclear migration of RGCs by antagonizing the microtubule growth-promoting function of TACC3. This Homo sapiens (Human) protein is Dedicator of cytokinesis protein 7 (DOCK7).